A 426-amino-acid polypeptide reads, in one-letter code: Glutamate-1-semialdehyde 2,1-aminomutase (426 aa).

Lys-265 bears the N6-(pyridoxal phosphate)lysine mark.

Belongs to the class-III pyridoxal-phosphate-dependent aminotransferase family. HemL subfamily. As to quaternary structure, homodimer. Requires pyridoxal 5'-phosphate as cofactor.

It is found in the cytoplasm. It catalyses the reaction (S)-4-amino-5-oxopentanoate = 5-aminolevulinate. It functions in the pathway porphyrin-containing compound metabolism; protoporphyrin-IX biosynthesis; 5-aminolevulinate from L-glutamyl-tRNA(Glu): step 2/2. In Salmonella schwarzengrund (strain CVM19633), this protein is Glutamate-1-semialdehyde 2,1-aminomutase.